A 590-amino-acid chain; its full sequence is Mannosyl-oligosaccharide 1,2-alpha-mannosidase mans-2 (590 aa).

Residues 1 to 9 (MKTVRFNKQ) lie on the Cytoplasmic side of the membrane. The helical; Signal-anchor for type II membrane protein transmembrane segment at 10–30 (ALAILAACFIFLLCVVCYFSA) threads the bilayer. Residues 31 to 590 (SSESHNAVVV…EAHPVPVLTN (560 aa)) are Lumenal-facing. The span at 88 to 102 (PARVESKPPGEKTST) shows a compositional bias: basic and acidic residues. The disordered stretch occupies residues 88–112 (PARVESKPPGEKTSTEPEETGVGKA). N-linked (GlcNAc...) asparagine glycans are attached at residues asparagine 156, asparagine 212, asparagine 373, and asparagine 402. An intrachain disulfide couples cysteine 423 to cysteine 456. Glutamate 470 serves as the catalytic Proton donor. Threonine 580 contributes to the Ca(2+) binding site.

It belongs to the glycosyl hydrolase 47 family. It depends on Ca(2+) as a cofactor.

It localises to the membrane. It catalyses the reaction N(4)-(alpha-D-Man-(1-&gt;2)-alpha-D-Man-(1-&gt;2)-alpha-D-Man-(1-&gt;3)-[alpha-D-Man-(1-&gt;2)-alpha-D-Man-(1-&gt;3)-[alpha-D-Man-(1-&gt;2)-alpha-D-Man-(1-&gt;6)]-alpha-D-Man-(1-&gt;6)]-beta-D-Man-(1-&gt;4)-beta-D-GlcNAc-(1-&gt;4)-beta-D-GlcNAc)-L-asparaginyl-[protein] (N-glucan mannose isomer 9A1,2,3B1,2,3) + 4 H2O = N(4)-(alpha-D-Man-(1-&gt;3)-[alpha-D-Man-(1-&gt;3)-[alpha-D-Man-(1-&gt;6)]-alpha-D-Man-(1-&gt;6)]-beta-D-Man-(1-&gt;4)-beta-D-GlcNAc-(1-&gt;4)-beta-D-GlcNAc)-L-asparaginyl-[protein] (N-glucan mannose isomer 5A1,2) + 4 beta-D-mannose. It carries out the reaction N(4)-(alpha-D-Man-(1-&gt;2)-alpha-D-Man-(1-&gt;2)-alpha-D-Man-(1-&gt;3)-[alpha-D-Man-(1-&gt;3)-[alpha-D-Man-(1-&gt;2)-alpha-D-Man-(1-&gt;6)]-alpha-D-Man-(1-&gt;6)]-beta-D-Man-(1-&gt;4)-beta-D-GlcNAc-(1-&gt;4)-beta-D-GlcNAc)-L-asparaginyl-[protein] (N-glucan mannose isomer 8A1,2,3B1,3) + 3 H2O = N(4)-(alpha-D-Man-(1-&gt;3)-[alpha-D-Man-(1-&gt;3)-[alpha-D-Man-(1-&gt;6)]-alpha-D-Man-(1-&gt;6)]-beta-D-Man-(1-&gt;4)-beta-D-GlcNAc-(1-&gt;4)-beta-D-GlcNAc)-L-asparaginyl-[protein] (N-glucan mannose isomer 5A1,2) + 3 beta-D-mannose. It functions in the pathway protein modification; protein glycosylation. Functionally, involved in the maturation of Asn-linked oligosaccharides. Progressively trim alpha-1,2-linked mannose residues from Man(9)GlcNAc(2) to produce Man(5)GlcNAc(2). This chain is Mannosyl-oligosaccharide 1,2-alpha-mannosidase mans-2, found in Caenorhabditis elegans.